The chain runs to 326 residues: MATH domain and coiled-coil domain-containing protein At3g58370 (326 aa).

Residues 7–133 (DNKFTWVIKN…NGEVKIVVEI (127 aa)) form the MATH domain. The stretch at 259-312 (LRLDWLEKKLAEVKAKKKKVETGKARLQRAEEELQKLNQKCLELKAFLEKENAD) forms a coiled coil.

The protein is MATH domain and coiled-coil domain-containing protein At3g58370 of Arabidopsis thaliana (Mouse-ear cress).